Consider the following 84-residue polypeptide: ATP synthase subunit c (84 aa).

2 helical membrane-spanning segments follow: residues 9-29 (IIGA…GFAI) and 54-74 (IVAG…LLFI).

The protein belongs to the ATPase C chain family. As to quaternary structure, F-type ATPases have 2 components, F(1) - the catalytic core - and F(0) - the membrane proton channel. F(1) has five subunits: alpha(3), beta(3), gamma(1), delta(1), epsilon(1). F(0) has three main subunits: a(1), b(2) and c(10-14). The alpha and beta chains form an alternating ring which encloses part of the gamma chain. F(1) is attached to F(0) by a central stalk formed by the gamma and epsilon chains, while a peripheral stalk is formed by the delta and b chains.

Its subcellular location is the cell inner membrane. Its function is as follows. F(1)F(0) ATP synthase produces ATP from ADP in the presence of a proton or sodium gradient. F-type ATPases consist of two structural domains, F(1) containing the extramembraneous catalytic core and F(0) containing the membrane proton channel, linked together by a central stalk and a peripheral stalk. During catalysis, ATP synthesis in the catalytic domain of F(1) is coupled via a rotary mechanism of the central stalk subunits to proton translocation. Key component of the F(0) channel; it plays a direct role in translocation across the membrane. A homomeric c-ring of between 10-14 subunits forms the central stalk rotor element with the F(1) delta and epsilon subunits. The protein is ATP synthase subunit c of Actinobacillus pleuropneumoniae serotype 7 (strain AP76).